Reading from the N-terminus, the 139-residue chain is Putative pre-16S rRNA nuclease (139 aa).

The protein belongs to the YqgF nuclease family.

It is found in the cytoplasm. In terms of biological role, could be a nuclease involved in processing of the 5'-end of pre-16S rRNA. In Legionella pneumophila subsp. pneumophila (strain Philadelphia 1 / ATCC 33152 / DSM 7513), this protein is Putative pre-16S rRNA nuclease.